Here is a 373-residue protein sequence, read N- to C-terminus: Chaperone protein DnaJ (373 aa).

The J domain maps to aspartate 4 to glycine 69. The segment at glycine 131 to threonine 209 adopts a CR-type zinc-finger fold. Zn(2+) is bound by residues cysteine 144, cysteine 147, cysteine 161, cysteine 164, cysteine 183, cysteine 186, cysteine 197, and cysteine 200. CXXCXGXG motif repeat units lie at residues cysteine 144–glycine 151, cysteine 161–glycine 168, cysteine 183–glycine 190, and cysteine 197–glycine 204.

This sequence belongs to the DnaJ family. Homodimer. The cofactor is Zn(2+).

The protein localises to the cytoplasm. Functionally, participates actively in the response to hyperosmotic and heat shock by preventing the aggregation of stress-denatured proteins and by disaggregating proteins, also in an autonomous, DnaK-independent fashion. Unfolded proteins bind initially to DnaJ; upon interaction with the DnaJ-bound protein, DnaK hydrolyzes its bound ATP, resulting in the formation of a stable complex. GrpE releases ADP from DnaK; ATP binding to DnaK triggers the release of the substrate protein, thus completing the reaction cycle. Several rounds of ATP-dependent interactions between DnaJ, DnaK and GrpE are required for fully efficient folding. Also involved, together with DnaK and GrpE, in the DNA replication of plasmids through activation of initiation proteins. In Desulfotalea psychrophila (strain LSv54 / DSM 12343), this protein is Chaperone protein DnaJ.